Reading from the N-terminus, the 1124-residue chain is Angiopoietin-1 receptor (1124 aa).

The first 22 residues, 1 to 22 (MDSLASLVLCGVSLLLSGTVEG), serve as a signal peptide directing secretion. At 23–748 (AMDLILINSL…ADLGGGKMLL (726 aa)) the chain is on the extracellular side. Cysteine 44 and cysteine 102 are oxidised to a cystine. An Ig-like C2-type 1 domain is found at 44–123 (CIASGWRPHE…RTMKMRQQAS (80 aa)). Residues asparagine 140 and asparagine 158 are each glycosylated (N-linked (GlcNAc...) asparagine). EGF-like domains are found at residues 210–252 (RCEA…RTCE), 254–299 (ACEL…LQCN), and 301–341 (ACHP…LQCE). Cystine bridges form between cysteine 211/cysteine 220, cysteine 224/cysteine 233, cysteine 227/cysteine 240, cysteine 242/cysteine 251, cysteine 255/cysteine 264, cysteine 268/cysteine 274, cysteine 280/cysteine 287, cysteine 289/cysteine 298, cysteine 302/cysteine 311, cysteine 315/cysteine 323, cysteine 317/cysteine 329, cysteine 331/cysteine 340, and cysteine 370/cysteine 424. The Ig-like C2-type 2 domain occupies 350–440 (PKIVDLPDHI…GMVEKPFNIS (91 aa)). 7 N-linked (GlcNAc...) asparagine glycosylation sites follow: asparagine 399, asparagine 438, asparagine 464, asparagine 560, asparagine 596, asparagine 649, and asparagine 691. Fibronectin type-III domains follow at residues 447–541 (PLNA…TASI), 545–636 (PPRG…TLSD), and 641–735 (QPEN…LPES). A helical membrane pass occupies residues 749-769 (IAILGSAGMTCLTVLLAFLII). The Cytoplasmic segment spans residues 770-1124 (LQLKRANVQR…GIDCSAEEAA (355 aa)). A Protein kinase domain is found at 824-1096 (IKFQDVIGEG…QILVSLNRML (273 aa)). Residues 830 to 838 (IGEGNFGQV) and lysine 855 each bind ATP. Tyrosine 860 is subject to Phosphotyrosine; by autocatalysis. Aspartate 964 acts as the Proton acceptor in catalysis. Phosphotyrosine; by autocatalysis occurs at positions 992, 1102, and 1108.

This sequence belongs to the protein kinase superfamily. Tyr protein kinase family. Tie subfamily. Homodimer. Heterodimer with TIE1. Interacts with ANGPT1, ANGPT2 and ANGPT4. At cell-cell contacts in quiescent cells, forms a signaling complex composed of ANGPT1 plus TEK molecules from two adjoining cells. In the absence of endothelial cell-cell contacts, interaction with ANGPT1 mediates contacts with the extracellular matrix. Interacts with PTPRB; this promotes endothelial cell-cell adhesion. Interacts with DOK2, GRB2, GRB7, GRB14, PIK3R1 and PTPN11/SHP2. Colocalizes with DOK2 at contacts with the extracellular matrix in migrating cells. Interacts (tyrosine phosphorylated) with TNIP2. Interacts (tyrosine phosphorylated) with SHC1 (via SH2 domain). Post-translationally, proteolytic processing leads to the shedding of the extracellular domain (soluble TIE-2 alias sTIE-2). In terms of processing, autophosphorylated on tyrosine residues in response to ligand binding. Autophosphorylation occurs in trans, i.e. one subunit of the dimeric receptor phosphorylates tyrosine residues on the other subunit. Autophosphorylation occurs in a sequential manner, where Tyr-992 in the kinase activation loop is phosphorylated first, followed by autophosphorylation at Tyr-1108 and at additional tyrosine residues. ANGPT1-induced phosphorylation is impaired during hypoxia, due to increased expression of ANGPT2. Phosphorylation is important for interaction with GRB14, PIK3R1 and PTPN11. Phosphorylation at Tyr-1102 is important for interaction with SHC1, GRB2 and GRB7. Phosphorylation at Tyr-1108 is important for interaction with DOK2 and for coupling to downstream signal transduction pathways in endothelial cells. Dephosphorylated by PTPRB. Ubiquitinated. The phosphorylated receptor is ubiquitinated and internalized, leading to its degradation. In terms of tissue distribution, detected in umbilical vein endothelial cells. Proteolytic processing gives rise to a soluble extracellular domain that is detected in blood plasma (at protein level). Predominantly expressed in endothelial cells and their progenitors, the angioblasts. Has been directly found in placenta and lung, with a lower level in umbilical vein endothelial cells, brain and kidney.

It is found in the cell membrane. The protein localises to the cell junction. The protein resides in the focal adhesion. It localises to the cytoplasm. Its subcellular location is the cytoskeleton. It is found in the secreted. It catalyses the reaction L-tyrosyl-[protein] + ATP = O-phospho-L-tyrosyl-[protein] + ADP + H(+). Its activity is regulated as follows. Angiopoietin binding leads to receptor dimerization and activation by autophosphorylation at Tyr-992 on the kinase activation loop. Inhibited by staurosporine, K252a, PP2, damnacanthal, SB203580, CEP-11207, CEP-11981 and CE-245677. Inhibited by triazine, thienopyrimidine and thiazolopyrimidine derivatives. Functionally, tyrosine-protein kinase that acts as a cell-surface receptor for ANGPT1, ANGPT2 and ANGPT4 and regulates angiogenesis, endothelial cell survival, proliferation, migration, adhesion and cell spreading, reorganization of the actin cytoskeleton, but also maintenance of vascular quiescence. Has anti-inflammatory effects by preventing the leakage of pro-inflammatory plasma proteins and leukocytes from blood vessels. Required for normal angiogenesis and heart development during embryogenesis. Required for post-natal hematopoiesis. After birth, activates or inhibits angiogenesis, depending on the context. Inhibits angiogenesis and promotes vascular stability in quiescent vessels, where endothelial cells have tight contacts. In quiescent vessels, ANGPT1 oligomers recruit TEK to cell-cell contacts, forming complexes with TEK molecules from adjoining cells, and this leads to preferential activation of phosphatidylinositol 3-kinase and the AKT1 signaling cascades. In migrating endothelial cells that lack cell-cell adhesions, ANGT1 recruits TEK to contacts with the extracellular matrix, leading to the formation of focal adhesion complexes, activation of PTK2/FAK and of the downstream kinases MAPK1/ERK2 and MAPK3/ERK1, and ultimately to the stimulation of sprouting angiogenesis. ANGPT1 signaling triggers receptor dimerization and autophosphorylation at specific tyrosine residues that then serve as binding sites for scaffold proteins and effectors. Signaling is modulated by ANGPT2 that has lower affinity for TEK, can promote TEK autophosphorylation in the absence of ANGPT1, but inhibits ANGPT1-mediated signaling by competing for the same binding site. Signaling is also modulated by formation of heterodimers with TIE1, and by proteolytic processing that gives rise to a soluble TEK extracellular domain. The soluble extracellular domain modulates signaling by functioning as decoy receptor for angiopoietins. TEK phosphorylates DOK2, GRB7, GRB14, PIK3R1; SHC1 and TIE1. The chain is Angiopoietin-1 receptor from Homo sapiens (Human).